The chain runs to 456 residues: Glutamyl-tRNA(Gln) amidotransferase subunit A (456 aa).

Active-site charge relay system residues include Lys74 and Ser149. The active-site Acyl-ester intermediate is the Ser173.

The protein belongs to the amidase family. GatA subfamily. As to quaternary structure, heterotrimer of A, B and C subunits.

The enzyme catalyses L-glutamyl-tRNA(Gln) + L-glutamine + ATP + H2O = L-glutaminyl-tRNA(Gln) + L-glutamate + ADP + phosphate + H(+). Allows the formation of correctly charged Gln-tRNA(Gln) through the transamidation of misacylated Glu-tRNA(Gln) in organisms which lack glutaminyl-tRNA synthetase. The reaction takes place in the presence of glutamine and ATP through an activated gamma-phospho-Glu-tRNA(Gln). The polypeptide is Glutamyl-tRNA(Gln) amidotransferase subunit A (Methanobrevibacter smithii (strain ATCC 35061 / DSM 861 / OCM 144 / PS)).